Reading from the N-terminus, the 441-residue chain is GTPase Der (441 aa).

EngA-type G domains lie at proline 4–isoleucine 169 and isoleucine 178–alanine 353. GTP contacts are provided by residues glycine 10–serine 17, aspartate 57–isoleucine 61, asparagine 120–aspartate 123, glycine 184–serine 191, aspartate 231–isoleucine 235, and asparagine 296–aspartate 299. The region spanning phenylalanine 354–glutamate 438 is the KH-like domain.

The protein belongs to the TRAFAC class TrmE-Era-EngA-EngB-Septin-like GTPase superfamily. EngA (Der) GTPase family. As to quaternary structure, associates with the 50S ribosomal subunit.

GTPase that plays an essential role in the late steps of ribosome biogenesis. The sequence is that of GTPase Der from Ruminiclostridium cellulolyticum (strain ATCC 35319 / DSM 5812 / JCM 6584 / H10) (Clostridium cellulolyticum).